A 239-amino-acid polypeptide reads, in one-letter code: tRNA (guanine-N(1)-)-methyltransferase (239 aa).

Residues Gly-108 and 127-132 (LGDYVL) contribute to the S-adenosyl-L-methionine site.

The protein belongs to the RNA methyltransferase TrmD family. As to quaternary structure, homodimer.

It localises to the cytoplasm. It catalyses the reaction guanosine(37) in tRNA + S-adenosyl-L-methionine = N(1)-methylguanosine(37) in tRNA + S-adenosyl-L-homocysteine + H(+). Its function is as follows. Specifically methylates guanosine-37 in various tRNAs. This Streptococcus pneumoniae serotype 19F (strain G54) protein is tRNA (guanine-N(1)-)-methyltransferase.